The chain runs to 470 residues: tRNA(Ile)-lysidine synthase (470 aa).

32–37 (SGGVDS) contributes to the ATP binding site.

It belongs to the tRNA(Ile)-lysidine synthase family.

The protein localises to the cytoplasm. The catalysed reaction is cytidine(34) in tRNA(Ile2) + L-lysine + ATP = lysidine(34) in tRNA(Ile2) + AMP + diphosphate + H(+). Ligates lysine onto the cytidine present at position 34 of the AUA codon-specific tRNA(Ile) that contains the anticodon CAU, in an ATP-dependent manner. Cytidine is converted to lysidine, thus changing the amino acid specificity of the tRNA from methionine to isoleucine. The sequence is that of tRNA(Ile)-lysidine synthase from Shewanella woodyi (strain ATCC 51908 / MS32).